Here is a 358-residue protein sequence, read N- to C-terminus: Protein IncC (358 aa).

The segment at 1-101 is disordered; sequence MGAIHEETAN…VGSRRQEETG (101 aa). The span at 88–99 shows a compositional bias: basic and acidic residues; the sequence is HRQEVGSRRQEE.

It belongs to the ParA family.

In terms of biological role, this is one of the proteins encoded by the trfB operon; it is involved in plasmid maintenance and replication. In Escherichia coli, this protein is Protein IncC (incC).